Reading from the N-terminus, the 511-residue chain is Vicilin-like seed storage protein At2g28490 (511 aa).

The N-terminal stretch at 1–27 (MEKNKRAIGFLLLVVLINGVMMTRSNG) is a signal peptide. Residues 54–81 (GGGGGGAWGGEGEGGGEWGGGGEGGGGG) form a disordered region. Cupin type-1 domains follow at residues 86–238 (FMMR…PELQ) and 329–480 (YNIY…ETMR). 4 N-linked (GlcNAc...) asparagine glycosylation sites follow: Asn231, Asn369, Asn403, and Asn464.

The protein belongs to the 7S seed storage protein family.

In terms of biological role, seed storage protein. This Arabidopsis thaliana (Mouse-ear cress) protein is Vicilin-like seed storage protein At2g28490.